Consider the following 402-residue polypeptide: 1-deoxy-D-xylulose 5-phosphate reductoisomerase (402 aa).

The NADPH site is built by T25, G26, S27, V28, R52, N53, and N136. K137 contacts 1-deoxy-D-xylulose 5-phosphate. NADPH is bound at residue E138. Position 162 (D162) interacts with Mn(2+). 4 residues coordinate 1-deoxy-D-xylulose 5-phosphate: S163, E164, S188, and H211. E164 is a binding site for Mn(2+). G217 is a binding site for NADPH. The 1-deoxy-D-xylulose 5-phosphate site is built by S224, N229, K230, and E233. E233 contacts Mn(2+).

It belongs to the DXR family. The cofactor is Mg(2+). It depends on Mn(2+) as a cofactor.

It carries out the reaction 2-C-methyl-D-erythritol 4-phosphate + NADP(+) = 1-deoxy-D-xylulose 5-phosphate + NADPH + H(+). The protein operates within isoprenoid biosynthesis; isopentenyl diphosphate biosynthesis via DXP pathway; isopentenyl diphosphate from 1-deoxy-D-xylulose 5-phosphate: step 1/6. Functionally, catalyzes the NADPH-dependent rearrangement and reduction of 1-deoxy-D-xylulose-5-phosphate (DXP) to 2-C-methyl-D-erythritol 4-phosphate (MEP). This chain is 1-deoxy-D-xylulose 5-phosphate reductoisomerase, found in Rhodospirillum centenum (strain ATCC 51521 / SW).